Reading from the N-terminus, the 251-residue chain is GTP cyclohydrolase 1 type 2 homolog (251 aa).

Residues His62, His63, Asp103, His215, and Glu219 each contribute to the a divalent metal cation site.

The protein belongs to the GTP cyclohydrolase I type 2/NIF3 family. Homohexamer.

In Mycoplasmopsis pulmonis (strain UAB CTIP) (Mycoplasma pulmonis), this protein is GTP cyclohydrolase 1 type 2 homolog.